A 463-amino-acid polypeptide reads, in one-letter code: NF-kappa-B-activating protein (463 aa).

Residues 1-14 are compositionally biased toward basic residues; that stretch reads MRSRSRSRSRQRER. Residues 1–358 form a disordered region; that stretch reads MRSRSRSRSR…GGSLNQKDFG (358 aa). 2 stretches are compositionally biased toward basic and acidic residues: residues 15–29 and 39–71; these read RRSD…ERRT and VSRE…DAVP. Positions 78 to 98 are enriched in low complexity; it reads SSPSRSSSSSSSDRSSSSRSP. The span at 107 to 125 shows a compositional bias: basic and acidic residues; that stretch reads KSVERWPNDRYHENNDRRQ. Residues serine 136, serine 189, and serine 191 each carry the phosphoserine modification. Threonine 195 bears the Phosphothreonine mark. Residues 208-238 are compositionally biased toward basic residues; sequence PKKKKKKGKRKHKKSEKKSKKKSKKSKKKKS. The span at 241–267 shows a compositional bias: low complexity; sequence ESSSSSSSSSSEDSSDESSSSSSSSSS. Over residues 268-278 the composition is skewed to acidic residues; sequence DSEDESEEEDV. Residues 279–288 are compositionally biased toward basic and acidic residues; that stretch reads WLEKTADGIK. The span at 289–312 shows a compositional bias: basic residues; sequence KPKKKKSSTSKKDKKSKKKKKKRK. Positions 330 to 340 are enriched in basic and acidic residues; sequence KNKESASHNDE.

The protein belongs to the NKAP family.

The protein resides in the nucleus. Functionally, tumor suppressor involved in maintaining genome integrity. Influences gene expression and mRNA splicing. This chain is NF-kappa-B-activating protein, found in Drosophila melanogaster (Fruit fly).